Consider the following 556-residue polypeptide: Phosphomethylpyrimidine synthase (556 aa).

Substrate is bound by residues Asn191, Met220, Tyr249, His285, 305–307 (SRG), 346–349 (DALR), and Glu385. His389 contacts Zn(2+). Tyr412 lines the substrate pocket. His453 is a binding site for Zn(2+). Residues Cys535, Cys538, and Cys543 each contribute to the [4Fe-4S] cluster site.

This sequence belongs to the ThiC family. Requires [4Fe-4S] cluster as cofactor.

The enzyme catalyses 5-amino-1-(5-phospho-beta-D-ribosyl)imidazole + S-adenosyl-L-methionine = 4-amino-2-methyl-5-(phosphooxymethyl)pyrimidine + CO + 5'-deoxyadenosine + formate + L-methionine + 3 H(+). It functions in the pathway cofactor biosynthesis; thiamine diphosphate biosynthesis. In terms of biological role, catalyzes the synthesis of the hydroxymethylpyrimidine phosphate (HMP-P) moiety of thiamine from aminoimidazole ribotide (AIR) in a radical S-adenosyl-L-methionine (SAM)-dependent reaction. This Chlorobaculum tepidum (strain ATCC 49652 / DSM 12025 / NBRC 103806 / TLS) (Chlorobium tepidum) protein is Phosphomethylpyrimidine synthase.